A 295-amino-acid polypeptide reads, in one-letter code: 4-hydroxy-tetrahydrodipicolinate synthase (295 aa).

Thr46 is a binding site for pyruvate. Tyr135 (proton donor/acceptor) is an active-site residue. Lys164 acts as the Schiff-base intermediate with substrate in catalysis. A pyruvate-binding site is contributed by Ile205.

It belongs to the DapA family. As to quaternary structure, homotetramer; dimer of dimers.

The protein resides in the cytoplasm. The catalysed reaction is L-aspartate 4-semialdehyde + pyruvate = (2S,4S)-4-hydroxy-2,3,4,5-tetrahydrodipicolinate + H2O + H(+). It participates in amino-acid biosynthesis; L-lysine biosynthesis via DAP pathway; (S)-tetrahydrodipicolinate from L-aspartate: step 3/4. Functionally, catalyzes the condensation of (S)-aspartate-beta-semialdehyde [(S)-ASA] and pyruvate to 4-hydroxy-tetrahydrodipicolinate (HTPA). This Aliarcobacter butzleri (strain RM4018) (Arcobacter butzleri) protein is 4-hydroxy-tetrahydrodipicolinate synthase.